We begin with the raw amino-acid sequence, 837 residues long: V-type proton ATPase 116 kDa subunit a 1 (837 aa).

The Cytoplasmic segment spans residues 1–388; that stretch reads MGELFRSEEM…DAYGIGTYRE (388 aa). 2 positions are modified to phosphothreonine: Thr250 and Thr360. Phosphotyrosine is present on Tyr364. The chain crosses the membrane as a helical span at residues 389–407; that stretch reads INPAPYTIITFPFLFAVMF. Residues 408–409 lie on the Vacuolar side of the membrane; the sequence is GD. Residues 410–426 form a helical membrane-spanning segment; it reads FGHGILMTLFAVWMVLR. The Cytoplasmic portion of the chain corresponds to 427–441; that stretch reads ESRILSQKNENEMFS. A helical membrane pass occupies residues 442–471; the sequence is TVFSGRYIILLMGVFSMYTGLIYNDCFSKS. Residues 472–534 are Vacuolar-facing; the sequence is LNIFGSSWSV…ATNKLTFLNS (63 aa). A helical transmembrane segment spans residues 535–554; sequence FKMKMSVILGIIHMLFGVSL. At 555-572 the chain is on the cytoplasmic side; the sequence is SLFNHIYFKKPLNIYFGF. A helical transmembrane segment spans residues 573–593; the sequence is IPEIIFMTSLFGYLVILIFYK. Residues 594-638 are Vacuolar-facing; that stretch reads WTAYDAHTSENAPSLLIHFINMFLFSYPESGYSMLYSGQKGIQCF. The helical transmembrane segment at 639–658 threads the bilayer; sequence LVVVALLCVPWMLLFKPLVL. The Cytoplasmic portion of the chain corresponds to 659-724; it reads RRQYLRRKHL…ATMVHQAIHT (66 aa). A helical membrane pass occupies residues 725–749; it reads IEYCLGCISNTASYLRLWALSLAHA. The Vacuolar portion of the chain corresponds to 750–770; it reads QLSEVLWTMVIHIGLSVKSLA. The helical transmembrane segment at 771-809 threads the bilayer; sequence GGLVLFFFFTAFATLTVAILLIMEGLSAFLHALRLHWVE. Over 810-837 the chain is Cytoplasmic; the sequence is FQNKFYSGTGFKFLPFSFEHIREGKFGE.

Belongs to the V-ATPase 116 kDa subunit family. V-ATPase is a heteromultimeric enzyme made up of two complexes: the ATP-hydrolytic V1 complex and the proton translocation V0 complex. The V1 complex consists of three catalytic AB heterodimers that form a heterohexamer, three peripheral stalks each consisting of EG heterodimers, one central rotor including subunits D and F, and the regulatory subunits C and H. The proton translocation complex V0 consists of the proton transport subunit a, a ring of proteolipid subunits c9c'', rotary subunit d, subunits e and f, and the accessory subunits ATP6AP1/Ac45 and ATP6AP2/PRR. Interacts with SPAAR.

Its subcellular location is the cytoplasmic vesicle. It localises to the clathrin-coated vesicle membrane. The protein resides in the secretory vesicle. It is found in the synaptic vesicle membrane. The protein localises to the melanosome. Functionally, subunit of the V0 complex of vacuolar(H+)-ATPase (V-ATPase), a multisubunit enzyme composed of a peripheral complex (V1) that hydrolyzes ATP and a membrane integral complex (V0) that translocates protons. V-ATPase is responsible for the acidification of various organelles, such as lysosomes, endosomes, the trans-Golgi network, and secretory granules, including synaptic vesicles. In certain cell types, can be exported to the plasma membrane, where it is involved in the acidification of the extracellular environment. Required for assembly and activity of the vacuolar ATPase. Through its action on compartment acidification, plays an essential role in neuronal development in terms of integrity and connectivity of neurons. This chain is V-type proton ATPase 116 kDa subunit a 1 (ATP6V0A1), found in Pongo abelii (Sumatran orangutan).